Reading from the N-terminus, the 136-residue chain is Autophagy-related protein 41 (136 aa).

The tract at residues 127-136 (QNYRLWLSSV) is ATG9-binding.

Interacts with ATG9.

Its subcellular location is the preautophagosomal structure membrane. Its function is as follows. Involved in both selective and non-selective autophagy. Does not appear to play a role in determining the size of autophagosomes, but rather influences their formation rate. With ATG9, plays a role in the delivery of donor membrane to expanding phagophore. The chain is Autophagy-related protein 41 from Saccharomyces cerevisiae (strain ATCC 204508 / S288c) (Baker's yeast).